Here is a 232-residue protein sequence, read N- to C-terminus: Pyridoxal 5'-phosphate synthase subunit PdxS (232 aa).

Residue Lys23 is the Schiff-base intermediate with D-ribose 5-phosphate of the active site. Residue Gly95 coordinates D-ribose 5-phosphate. D-glyceraldehyde 3-phosphate is bound at residue Arg107. Residues Gly156 and 177–178 each bind D-ribose 5-phosphate; that span reads GS.

Belongs to the PdxS/SNZ family. As to quaternary structure, in the presence of PdxT, forms a dodecamer of heterodimers.

It catalyses the reaction aldehydo-D-ribose 5-phosphate + D-glyceraldehyde 3-phosphate + L-glutamine = pyridoxal 5'-phosphate + L-glutamate + phosphate + 3 H2O + H(+). The protein operates within cofactor biosynthesis; pyridoxal 5'-phosphate biosynthesis. In terms of biological role, catalyzes the formation of pyridoxal 5'-phosphate from ribose 5-phosphate (RBP), glyceraldehyde 3-phosphate (G3P) and ammonia. The ammonia is provided by the PdxT subunit. Can also use ribulose 5-phosphate and dihydroxyacetone phosphate as substrates, resulting from enzyme-catalyzed isomerization of RBP and G3P, respectively. The chain is Pyridoxal 5'-phosphate synthase subunit PdxS from Clostridium novyi.